A 296-amino-acid chain; its full sequence is Cytidine deaminase (296 aa).

CMP/dCMP-type deaminase domains are found at residues 47–167 (TEAE…FGPK) and 186–296 (DSSD…VDPV). Position 88–90 (88–90 (NLE)) interacts with substrate. His-101 is a Zn(2+) binding site. Glu-103 functions as the Proton donor in the catalytic mechanism. The Zn(2+) site is built by Cys-128 and Cys-131.

This sequence belongs to the cytidine and deoxycytidylate deaminase family. In terms of assembly, homodimer. Zn(2+) is required as a cofactor.

The enzyme catalyses cytidine + H2O + H(+) = uridine + NH4(+). It carries out the reaction 2'-deoxycytidine + H2O + H(+) = 2'-deoxyuridine + NH4(+). This enzyme scavenges exogenous and endogenous cytidine and 2'-deoxycytidine for UMP synthesis. In Shewanella sp. (strain W3-18-1), this protein is Cytidine deaminase.